The following is a 289-amino-acid chain: Ketose 3-epimerase (289 aa).

The active-site Proton donor/acceptor is E146. Position 146 (E146) interacts with Mn(2+). Substrate is bound by residues E152 and 179 to 182 (DTYH). D179 and H205 together coordinate Mn(2+). Position 211 (R211) interacts with substrate. E240 acts as the Proton donor/acceptor in catalysis. E240 lines the Mn(2+) pocket.

Belongs to the hyi family. Homotetramer. Mg(2+) serves as cofactor. It depends on Mn(2+) as a cofactor. Requires Co(2+) as cofactor.

The enzyme catalyses L-ribulose = L-xylulose. The catalysed reaction is D-allulose = keto-D-fructose. It carries out the reaction keto-L-tagatose = keto-L-sorbose. It catalyses the reaction D-ribulose = D-xylulose. The enzyme catalyses L-allulose = keto-L-fructose. The catalysed reaction is keto-D-tagatose = keto-D-sorbose. Catalyzes the reversible C-3 epimerization of several ketoses. Shows the highest enzymatic activity for the epimerization of L-ribulose to L-xylulose. Is also able to convert D-allulose (also known as D-psicose) to D-fructose and, to a lesser extent, L-tagatose to L-sorbose, D-ribulose to D-xylulose, L-allulose to L-fructose and D-tagatose to D-sorbose. This chain is Ketose 3-epimerase, found in Arthrobacter globiformis.